The chain runs to 534 residues: Cytochrome c oxidase subunit 1 (534 aa).

Residues 16–36 traverse the membrane as a helical segment; it reads VLYFIFAIFCGMAGTAMSLII. Residues Glu-39, Ala-42, and Gly-44 each coordinate Ca(2+). 6 helical membrane passes run 57 to 77, 101 to 121, 147 to 167, 182 to 202, 235 to 255, and 267 to 287; these read VLVVGHAVLIIFFLVMPALIG, ISFWCLPPALVCLVTSTLVES, AIFALHLTSISSLLGAINFIV, LPLFVWSIFITAFLLLLSLPV, LFWFFGHPEVYILIIPGFGII, and VFGEVSMVYAMASIGLLGFLV. His-62 serves as a coordination point for Fe(II)-heme a. His-241 lines the Cu cation pocket. The segment at residues 241 to 245 is a cross-link (1'-histidyl-3'-tyrosine (His-Tyr)); it reads HPEVY. Tyr-245 provides a ligand contact to O2. His-290 and His-291 together coordinate Cu cation. A run of 2 helical transmembrane segments spans residues 310–330 and 338–358; these read MIIAIPTGIKIFSWLATIYGG and MLYAIAFLFLFTIGGLTGVAL. His-368 and Asp-369 together coordinate Mg(2+). 2 helical membrane passes run 372–392 and 412–432; these read YVVGHFHYVLSMGAIFSLFAG and IQFWLIFVGANVIFLPMHFLG. Residue His-376 participates in heme a3 binding. Residue His-378 participates in Fe(II)-heme a binding. Pro-441 provides a ligand contact to Ca(2+). A helical membrane pass occupies residues 452-472; sequence YVASIGSIIAVFSLFLFIYIL.

The protein belongs to the heme-copper respiratory oxidase family. In terms of assembly, component of the cytochrome c oxidase (complex IV, CIV), a multisubunit enzyme composed of a catalytic core of 3 subunits and several supernumerary subunits. The complex exists as a monomer or a dimer and forms supercomplexes (SCs) in the inner mitochondrial membrane with ubiquinol-cytochrome c oxidoreductase (cytochrome b-c1 complex, complex III, CIII). Heme is required as a cofactor. The cofactor is Cu cation.

The protein localises to the mitochondrion inner membrane. The enzyme catalyses 4 Fe(II)-[cytochrome c] + O2 + 8 H(+)(in) = 4 Fe(III)-[cytochrome c] + 2 H2O + 4 H(+)(out). It participates in energy metabolism; oxidative phosphorylation. Component of the cytochrome c oxidase, the last enzyme in the mitochondrial electron transport chain which drives oxidative phosphorylation. The respiratory chain contains 3 multisubunit complexes succinate dehydrogenase (complex II, CII), ubiquinol-cytochrome c oxidoreductase (cytochrome b-c1 complex, complex III, CIII) and cytochrome c oxidase (complex IV, CIV), that cooperate to transfer electrons derived from NADH and succinate to molecular oxygen, creating an electrochemical gradient over the inner membrane that drives transmembrane transport and the ATP synthase. Cytochrome c oxidase is the component of the respiratory chain that catalyzes the reduction of oxygen to water. Electrons originating from reduced cytochrome c in the intermembrane space (IMS) are transferred via the dinuclear copper A center (CU(A)) of subunit 2 and heme A of subunit 1 to the active site in subunit 1, a binuclear center (BNC) formed by heme A3 and copper B (CU(B)). The BNC reduces molecular oxygen to 2 water molecules using 4 electrons from cytochrome c in the IMS and 4 protons from the mitochondrial matrix. The protein is Cytochrome c oxidase subunit 1 (COX1) of Kluyveromyces lactis (strain ATCC 8585 / CBS 2359 / DSM 70799 / NBRC 1267 / NRRL Y-1140 / WM37) (Yeast).